The following is a 338-amino-acid chain: Ketol-acid reductoisomerase (NADP(+)) (338 aa).

The 181-residue stretch at methionine 1–threonine 181 folds into the KARI N-terminal Rossmann domain. NADP(+) is bound by residues tyrosine 24–glutamine 27, arginine 47, serine 50, threonine 52, and aspartate 82–glutamine 85. Histidine 107 is an active-site residue. Glycine 133 is a binding site for NADP(+). Residues threonine 182–isoleucine 327 form the KARI C-terminal knotted domain. Mg(2+)-binding residues include aspartate 190, glutamate 194, glutamate 226, and glutamate 230. Serine 251 serves as a coordination point for substrate.

Belongs to the ketol-acid reductoisomerase family. The cofactor is Mg(2+).

It catalyses the reaction (2R)-2,3-dihydroxy-3-methylbutanoate + NADP(+) = (2S)-2-acetolactate + NADPH + H(+). The catalysed reaction is (2R,3R)-2,3-dihydroxy-3-methylpentanoate + NADP(+) = (S)-2-ethyl-2-hydroxy-3-oxobutanoate + NADPH + H(+). It participates in amino-acid biosynthesis; L-isoleucine biosynthesis; L-isoleucine from 2-oxobutanoate: step 2/4. It functions in the pathway amino-acid biosynthesis; L-valine biosynthesis; L-valine from pyruvate: step 2/4. Functionally, involved in the biosynthesis of branched-chain amino acids (BCAA). Catalyzes an alkyl-migration followed by a ketol-acid reduction of (S)-2-acetolactate (S2AL) to yield (R)-2,3-dihydroxy-isovalerate. In the isomerase reaction, S2AL is rearranged via a Mg-dependent methyl migration to produce 3-hydroxy-3-methyl-2-ketobutyrate (HMKB). In the reductase reaction, this 2-ketoacid undergoes a metal-dependent reduction by NADPH to yield (R)-2,3-dihydroxy-isovalerate. The polypeptide is Ketol-acid reductoisomerase (NADP(+)) (Pseudomonas fluorescens (strain SBW25)).